The following is a 364-amino-acid chain: BTB/POZ and TAZ domain-containing protein 2 (364 aa).

The BTB domain occupies 34-106 (SDVEIVTSDN…LYSSSLTEDE (73 aa)). Residues 203-212 (RKKRRRRHRK) carry the Nuclear localization signal motif. The TAZ-type zinc-finger motif lies at 215 to 316 (DLYMQLSEAM…PDSCRVPLCR (102 aa)). The caM-binding stretch occupies residues 327–350 (KMGEDTKWKLLVTRVVSAKAMTSL).

As to quaternary structure, interacts with CUL3A. Interacts with GTE11/BET10 through the BTB domain. As to expression, preferentially expressed in young leaves and roots.

It localises to the nucleus. It is found in the cytoplasm. It participates in protein modification; protein ubiquitination. In terms of biological role, may act as a substrate-specific adapter of an E3 ubiquitin-protein ligase complex (CUL3-RBX1-BTB) which mediates the ubiquitination and subsequent proteasomal degradation of target proteins. Plays a key role as a component of the TAC1-mediated telomerase activation pathway certainly by targeting a telomerase repressor to degradation. Seems to occupy an integral position in a complex signaling network that perceives, integrates, and responds to multiple, and sometimes competing, signals. Enhances responses to auxin in postgermination and vegetative development. Also negatively regulates ABA- and sugar-mediated inhibition of the germination. Essential for female and male gametophyte development. The protein is BTB/POZ and TAZ domain-containing protein 2 (BT2) of Arabidopsis thaliana (Mouse-ear cress).